The sequence spans 261 residues: Cytochrome c oxidase subunit 2 (261 aa).

Residues Met1–Gln34 are Mitochondrial intermembrane-facing. Residues Gly35–Ser55 form a helical membrane-spanning segment. The Mitochondrial matrix portion of the chain corresponds to Arg56–Thr87. The helical transmembrane segment at Ile88 to Met108 threads the bilayer. Residues Asp109–Ala261 are Mitochondrial intermembrane-facing. 5 residues coordinate Cu cation: His188, Cys223, Glu225, Cys227, and His231. Glu225 serves as a coordination point for Mg(2+).

Belongs to the cytochrome c oxidase subunit 2 family. Component of the cytochrome c oxidase (complex IV, CIV), a multisubunit enzyme composed of a catalytic core of 3 subunits and several supernumerary subunits. The complex exists as a monomer or a dimer and forms supercomplexes (SCs) in the inner mitochondrial membrane with ubiquinol-cytochrome c oxidoreductase (cytochrome b-c1 complex, complex III, CIII). It depends on Cu cation as a cofactor.

The protein localises to the mitochondrion inner membrane. It carries out the reaction 4 Fe(II)-[cytochrome c] + O2 + 8 H(+)(in) = 4 Fe(III)-[cytochrome c] + 2 H2O + 4 H(+)(out). Functionally, component of the cytochrome c oxidase, the last enzyme in the mitochondrial electron transport chain which drives oxidative phosphorylation. The respiratory chain contains 3 multisubunit complexes succinate dehydrogenase (complex II, CII), ubiquinol-cytochrome c oxidoreductase (cytochrome b-c1 complex, complex III, CIII) and cytochrome c oxidase (complex IV, CIV), that cooperate to transfer electrons derived from NADH and succinate to molecular oxygen, creating an electrochemical gradient over the inner membrane that drives transmembrane transport and the ATP synthase. Cytochrome c oxidase is the component of the respiratory chain that catalyzes the reduction of oxygen to water. Electrons originating from reduced cytochrome c in the intermembrane space (IMS) are transferred via the dinuclear copper A center (CU(A)) of subunit 2 and heme A of subunit 1 to the active site in subunit 1, a binuclear center (BNC) formed by heme A3 and copper B (CU(B)). The BNC reduces molecular oxygen to 2 water molecules using 4 electrons from cytochrome c in the IMS and 4 protons from the mitochondrial matrix. This Daucus carota (Wild carrot) protein is Cytochrome c oxidase subunit 2 (COX2).